Reading from the N-terminus, the 338-residue chain is Ornithine carbamoyltransferase, catabolic (338 aa).

Residues 65–68, Gln-92, Arg-116, and 143–146 contribute to the carbamoyl phosphate site; these read STRT and HPTQ. L-ornithine is bound by residues Asn-175, Asp-239, and 243–244; that span reads SM. Carbamoyl phosphate is bound by residues 280-281 and Arg-325; that span reads CL.

This sequence belongs to the aspartate/ornithine carbamoyltransferase superfamily. OTCase family.

The protein localises to the cytoplasm. The enzyme catalyses carbamoyl phosphate + L-ornithine = L-citrulline + phosphate + H(+). Its pathway is amino-acid degradation; L-arginine degradation via ADI pathway; carbamoyl phosphate from L-arginine: step 2/2. Reversibly catalyzes the transfer of the carbamoyl group from carbamoyl phosphate (CP) to the N(epsilon) atom of ornithine (ORN) to produce L-citrulline. This is Ornithine carbamoyltransferase, catabolic from Treponema denticola (strain ATCC 35405 / DSM 14222 / CIP 103919 / JCM 8153 / KCTC 15104).